The primary structure comprises 161 residues: Nucleotide-binding protein Plav_2177 (161 aa).

The protein belongs to the YajQ family.

Nucleotide-binding protein. This Parvibaculum lavamentivorans (strain DS-1 / DSM 13023 / NCIMB 13966) protein is Nucleotide-binding protein Plav_2177.